Consider the following 286-residue polypeptide: Polyamine aminopropyltransferase (286 aa).

Residues 5–238 form the PABS domain; the sequence is TMWHETLHDQ…GIMTFAWATD (234 aa). Gln33 is an S-methyl-5'-thioadenosine binding site. Residues His64 and Asp88 each contribute to the spermidine site. S-methyl-5'-thioadenosine contacts are provided by residues Glu108 and 140 to 141; that span reads DG. The active-site Proton acceptor is the Asp158. 158–161 serves as a coordination point for spermidine; the sequence is DCTD. Pro165 contacts S-methyl-5'-thioadenosine.

It belongs to the spermidine/spermine synthase family. As to quaternary structure, homodimer or homotetramer.

It localises to the cytoplasm. The enzyme catalyses S-adenosyl 3-(methylsulfanyl)propylamine + putrescine = S-methyl-5'-thioadenosine + spermidine + H(+). Its pathway is amine and polyamine biosynthesis; spermidine biosynthesis; spermidine from putrescine: step 1/1. Catalyzes the irreversible transfer of a propylamine group from the amino donor S-adenosylmethioninamine (decarboxy-AdoMet) to putrescine (1,4-diaminobutane) to yield spermidine. This Salmonella typhi protein is Polyamine aminopropyltransferase.